Consider the following 245-residue polypeptide: Histone deacetylase HDT1 (245 aa).

Met-1 bears the N-acetylmethionine mark. 2 required to repress transcription regions span residues 2-5 and 101-162; these read EFWG and GYSE…EEEE. The segment at 99-245 is disordered; it reads PQGYSEEEEE…HNKAKHAAAK (147 aa). Positions 103–113 are enriched in acidic residues; the sequence is SEEEEEEEEEV. Low complexity predominate over residues 114–124; it reads PAGNAAKAVAK. The span at 137–162 shows a compositional bias: acidic residues; sequence DDEEDESDSDGMDEDDSDGEDSEEEE. The segment covering 178 to 195 has biased composition (low complexity); sequence TTPKAPVSAKKAKVAVTP. Over residues 208 to 234 the composition is skewed to polar residues; the sequence is ANQSPKSASQVSCGSCKKTFNSGNALE. The residue at position 211 (Ser-211) is a Phosphoserine. The C2H2-type zinc-finger motif lies at 218–241; that stretch reads VSCGSCKKTFNSGNALESHNKAKH.

Belongs to the histone deacetylase HD2 family. Interacts with DNMT2. Interacts with DEK3. Expressed in leaves, roots, stems, young plantlets, flowers and siliques. Highest levels in ovules, embryos, shoot apical meristems and first leaves. Also expressed in somatic embryos.

The protein resides in the nucleus. Its subcellular location is the nucleolus. Functionally, probably mediates the deacetylation of lysine residues on the N-terminal part of the core histones (H2A, H2B, H3 and H4). Histone deacetylation gives a tag for epigenetic repression and plays an important role in transcriptional regulation, cell cycle progression and developmental events. Required for histone H3 'Lys-9' deacetylation. Involved in rRNA gene silencing in nucleolar dominance. Seems to be implicated in the regulation of genes involved in seeds development. This is Histone deacetylase HDT1 from Arabidopsis thaliana (Mouse-ear cress).